The primary structure comprises 404 residues: Cysteine--tRNA ligase (404 aa).

Cysteine 14 contacts Zn(2+). A 'HIGH' region motif is present at residues 16 to 26; the sequence is PTVYSDVHIGN. Positions 190, 216, and 220 each coordinate Zn(2+). Residues 248-252 carry the 'KMSKS' region motif; sequence KMAKS. Lysine 251 is an ATP binding site.

Belongs to the class-I aminoacyl-tRNA synthetase family. As to quaternary structure, monomer. Requires Zn(2+) as cofactor.

It is found in the cytoplasm. It carries out the reaction tRNA(Cys) + L-cysteine + ATP = L-cysteinyl-tRNA(Cys) + AMP + diphosphate. The protein is Cysteine--tRNA ligase of Mesomycoplasma hyopneumoniae (strain 232) (Mycoplasma hyopneumoniae).